The chain runs to 620 residues: 1-deoxy-D-xylulose-5-phosphate synthase (620 aa).

Residues His80 and 121 to 123 each bind thiamine diphosphate; that span reads GHS. Asp152 serves as a coordination point for Mg(2+). Thiamine diphosphate contacts are provided by residues 153–154, Asn181, Tyr288, and Glu370; that span reads GA. Asn181 contributes to the Mg(2+) binding site.

This sequence belongs to the transketolase family. DXPS subfamily. Homodimer. The cofactor is Mg(2+). Requires thiamine diphosphate as cofactor.

The enzyme catalyses D-glyceraldehyde 3-phosphate + pyruvate + H(+) = 1-deoxy-D-xylulose 5-phosphate + CO2. Its pathway is metabolic intermediate biosynthesis; 1-deoxy-D-xylulose 5-phosphate biosynthesis; 1-deoxy-D-xylulose 5-phosphate from D-glyceraldehyde 3-phosphate and pyruvate: step 1/1. In terms of biological role, catalyzes the acyloin condensation reaction between C atoms 2 and 3 of pyruvate and glyceraldehyde 3-phosphate to yield 1-deoxy-D-xylulose-5-phosphate (DXP). This is 1-deoxy-D-xylulose-5-phosphate synthase from Shigella boydii serotype 18 (strain CDC 3083-94 / BS512).